The chain runs to 634 residues: Leucine--tRNA ligase subunit alpha (634 aa).

The 'HIGH' region signature appears at Pro43–His51.

This sequence belongs to the class-I aminoacyl-tRNA synthetase family. Seems to consist of an alpha chain and a beta chain.

The protein localises to the cytoplasm. The catalysed reaction is tRNA(Leu) + L-leucine + ATP = L-leucyl-tRNA(Leu) + AMP + diphosphate. The chain is Leucine--tRNA ligase subunit alpha (leuS) from Aquifex aeolicus (strain VF5).